Reading from the N-terminus, the 187-residue chain is CASP-like protein SELMODRAFT_416718 (187 aa).

The helical transmembrane segment at 1-21 threads the bilayer; the sequence is MMFGGVGMATLPLSLIFAFKN. Over 22-100 the chain is Extracellular; that stretch reads RPKCVITRAQ…EAFPQGEKAD (79 aa). The helical transmembrane segment at 101-119 threads the bilayer; it reads TSWALTVLFYLAKLVFGIL. The Cytoplasmic segment spans residues 120–125; it reads GLALSV. Residues 126–145 traverse the membrane as a helical segment; it reads IWLLHIIVFMLVNPPAFPFL. Topologically, residues 146 to 155 are extracellular; it reads NQVFIQLDSA. A helical transmembrane segment spans residues 156-176; sequence WGLLGTTAFAIFCYYLVMSVI. The Cytoplasmic segment spans residues 177–187; it reads SGEMHSIYPMK.

It belongs to the Casparian strip membrane proteins (CASP) family. In terms of assembly, homodimer and heterodimers.

It is found in the cell membrane. The sequence is that of CASP-like protein SELMODRAFT_416718 from Selaginella moellendorffii (Spikemoss).